Here is a 375-residue protein sequence, read N- to C-terminus: Solute carrier family 35 member F2 (375 aa).

Met-1 is subject to N-acetylmethionine. A phosphoserine mark is found at Ser-5, Ser-22, Ser-25, and Ser-28. 10 helical membrane passes run Ile-39–Thr-59, Met-73–Phe-93, Trp-108–Val-126, Ser-136–Leu-156, Phe-165–Ala-185, Val-195–Cys-215, Glu-227–Val-247, Leu-263–Ile-283, Ser-290–Phe-310, and Phe-314–Ser-334. Ser-372 is subject to Phosphoserine.

The protein belongs to the SLC35F solute transporter family.

The protein localises to the membrane. Putative solute transporter. This chain is Solute carrier family 35 member F2 (Slc35f2), found in Mus musculus (Mouse).